A 369-amino-acid polypeptide reads, in one-letter code: tRNA/tmRNA (uracil-C(5))-methyltransferase (369 aa).

Residues Q190, Y218, N223, E239, and D301 each coordinate S-adenosyl-L-methionine. C326 serves as the catalytic Nucleophile. The Proton acceptor role is filled by E360.

Belongs to the class I-like SAM-binding methyltransferase superfamily. RNA M5U methyltransferase family. TrmA subfamily.

The catalysed reaction is uridine(54) in tRNA + S-adenosyl-L-methionine = 5-methyluridine(54) in tRNA + S-adenosyl-L-homocysteine + H(+). It carries out the reaction uridine(341) in tmRNA + S-adenosyl-L-methionine = 5-methyluridine(341) in tmRNA + S-adenosyl-L-homocysteine + H(+). Functionally, dual-specificity methyltransferase that catalyzes the formation of 5-methyluridine at position 54 (m5U54) in all tRNAs, and that of position 341 (m5U341) in tmRNA (transfer-mRNA). This is tRNA/tmRNA (uracil-C(5))-methyltransferase from Vibrio cholerae serotype O1 (strain ATCC 39541 / Classical Ogawa 395 / O395).